Reading from the N-terminus, the 449-residue chain is Bifunctional protein GlmU (449 aa).

The tract at residues Met-1–Arg-229 is pyrophosphorylase. Residues Leu-8–Gly-11, Lys-22, Gln-72, and Gly-77–Thr-78 contribute to the UDP-N-acetyl-alpha-D-glucosamine site. Mg(2+) is bound at residue Asp-102. UDP-N-acetyl-alpha-D-glucosamine-binding residues include Gly-139, Glu-154, Asn-169, and Asn-227. Asn-227 provides a ligand contact to Mg(2+). The segment at Val-230 to Gln-250 is linker. The segment at Gly-251–Arg-449 is N-acetyltransferase. Residues Arg-332 and Lys-350 each coordinate UDP-N-acetyl-alpha-D-glucosamine. His-362 functions as the Proton acceptor in the catalytic mechanism. 2 residues coordinate UDP-N-acetyl-alpha-D-glucosamine: Tyr-365 and Asn-376. Acetyl-CoA-binding positions include Asn-385–Tyr-386, Ala-422, and Arg-439.

The protein in the N-terminal section; belongs to the N-acetylglucosamine-1-phosphate uridyltransferase family. It in the C-terminal section; belongs to the transferase hexapeptide repeat family. In terms of assembly, homotrimer. Mg(2+) serves as cofactor.

The protein localises to the cytoplasm. It carries out the reaction alpha-D-glucosamine 1-phosphate + acetyl-CoA = N-acetyl-alpha-D-glucosamine 1-phosphate + CoA + H(+). The catalysed reaction is N-acetyl-alpha-D-glucosamine 1-phosphate + UTP + H(+) = UDP-N-acetyl-alpha-D-glucosamine + diphosphate. The protein operates within nucleotide-sugar biosynthesis; UDP-N-acetyl-alpha-D-glucosamine biosynthesis; N-acetyl-alpha-D-glucosamine 1-phosphate from alpha-D-glucosamine 6-phosphate (route II): step 2/2. Its pathway is nucleotide-sugar biosynthesis; UDP-N-acetyl-alpha-D-glucosamine biosynthesis; UDP-N-acetyl-alpha-D-glucosamine from N-acetyl-alpha-D-glucosamine 1-phosphate: step 1/1. It functions in the pathway bacterial outer membrane biogenesis; LPS lipid A biosynthesis. In terms of biological role, catalyzes the last two sequential reactions in the de novo biosynthetic pathway for UDP-N-acetylglucosamine (UDP-GlcNAc). The C-terminal domain catalyzes the transfer of acetyl group from acetyl coenzyme A to glucosamine-1-phosphate (GlcN-1-P) to produce N-acetylglucosamine-1-phosphate (GlcNAc-1-P), which is converted into UDP-GlcNAc by the transfer of uridine 5-monophosphate (from uridine 5-triphosphate), a reaction catalyzed by the N-terminal domain. This Exiguobacterium sibiricum (strain DSM 17290 / CCUG 55495 / CIP 109462 / JCM 13490 / 255-15) protein is Bifunctional protein GlmU.